Consider the following 550-residue polypeptide: Acyl-CoA-dependent acyltransferase MAC2 (550 aa).

Belongs to the trichothecene O-acetyltransferase family.

It participates in secondary metabolite biosynthesis. In terms of biological role, acyl-CoA-dependent acyltransferase; part of the gene cluster that mediates the biosynthesis of mannosylerythritol lipids (MELs), surface-active substances that enhance the availability of water-insoluble substrates. Depending on the number of acetyl groups, mannosylerythritol lipids can be differentiated into MEL A (fully acetylated), MEL B and MEL C (monoacetylated at R-6 and R-4, respectively), and the fully deacetylated MEL D. The first step in the pathway is the generation of mannosylerythritol by the glycosyltransferase EMT1 which catalyzes the transfer of GDP-mannose to the C-4 atom of meso-erythritol. This reaction has to be stereospecific, since only mannosyl-D-erythritol is generated. The produced disaccharide is subsequently acylated with fatty acids of various lengths by the acyltransferases MAC1 and MAC2 at positions C-2 and C-3, repectively. The existence of MEL derivatives which carry an acetyl group at C-2 implies that at least MAC1 also accepts acetyl-CoA as a donor. The final step of MEL biosynthesis is the acetylation of the fully acylated mannosylerythritol lipids catalyzed by the acetyl-CoA-dependent acetyltransferase MAT1. MAT1 displays a relaxed regioselectivity and is able to transfer acetylgroups to both positions C-4 and C-6 of the mannosyl moiety. The protein is Acyl-CoA-dependent acyltransferase MAC2 of Pseudozyma antarctica (strain T-34) (Yeast).